A 481-amino-acid chain; its full sequence is Arylsulfatase (481 aa).

Ca(2+) contacts are provided by aspartate 11, glutamine 12, and cysteine 51. Cysteine 51 (nucleophile) is an active-site residue. Cysteine 51 carries the 3-oxoalanine (Cys) modification. Histidine 102 is a catalytic residue. Residues aspartate 302 and histidine 303 each coordinate Ca(2+).

The protein belongs to the sulfatase family. Ca(2+) is required as a cofactor. The conversion to 3-oxoalanine (also known as C-formylglycine, FGly), of a serine or cysteine residue in prokaryotes and of a cysteine residue in eukaryotes, is critical for catalytic activity.

The catalysed reaction is an aryl sulfate + H2O = a phenol + sulfate + H(+). Has sulfatase activity toward para-nitrophenyl sulfate, which is increased in presence of calcium ion. This is Arylsulfatase from Clostridium perfringens (strain 13 / Type A).